Reading from the N-terminus, the 644-residue chain is Tripeptidyl-peptidase sed1 (644 aa).

The N-terminal stretch at 1–18 is a signal peptide; it reads MRLSHVLLGTAAAAGVLA. Residues 19-196 constitute a propeptide, removed in mature form; the sequence is SPTPNDYVVH…KARSIEKRSF (178 aa). Residues 224 to 643 enclose the Peptidase S53 domain; the sequence is AITPLCISAL…PALLDLFMSL (420 aa). Residue Asn-235 is glycosylated (N-linked (GlcNAc...) asparagine). Residues Glu-300 and Asp-304 each act as charge relay system in the active site. Residues Asn-326, Asn-332, and Asn-519 are each glycosylated (N-linked (GlcNAc...) asparagine). Ser-561 acts as the Charge relay system in catalysis. Asp-602, Ile-603, Gly-621, and Asp-623 together coordinate Ca(2+).

Ca(2+) serves as cofactor. N-glycosylated.

It is found in the secreted. The protein resides in the extracellular space. It catalyses the reaction Release of an N-terminal tripeptide from a polypeptide.. Secreted tripeptidyl-peptidase which degrades proteins at acidic pHs and is involved in virulence. The chain is Tripeptidyl-peptidase sed1 (sed1) from Aspergillus fumigatus (strain ATCC MYA-4609 / CBS 101355 / FGSC A1100 / Af293) (Neosartorya fumigata).